Consider the following 319-residue polypeptide: Aspartate carbamoyltransferase catalytic subunit (319 aa).

Arginine 65 and threonine 66 together coordinate carbamoyl phosphate. Lysine 93 lines the L-aspartate pocket. Carbamoyl phosphate is bound by residues arginine 115, histidine 149, and glutamine 152. Positions 182 and 237 each coordinate L-aspartate. Positions 278 and 279 each coordinate carbamoyl phosphate.

Belongs to the aspartate/ornithine carbamoyltransferase superfamily. ATCase family. In terms of assembly, heterododecamer (2C3:3R2) of six catalytic PyrB chains organized as two trimers (C3), and six regulatory PyrI chains organized as three dimers (R2).

It catalyses the reaction carbamoyl phosphate + L-aspartate = N-carbamoyl-L-aspartate + phosphate + H(+). Its pathway is pyrimidine metabolism; UMP biosynthesis via de novo pathway; (S)-dihydroorotate from bicarbonate: step 2/3. Functionally, catalyzes the condensation of carbamoyl phosphate and aspartate to form carbamoyl aspartate and inorganic phosphate, the committed step in the de novo pyrimidine nucleotide biosynthesis pathway. This Azoarcus sp. (strain BH72) protein is Aspartate carbamoyltransferase catalytic subunit.